The following is a 209-amino-acid chain: ATP synthase subunit delta (209 aa).

It belongs to the ATPase delta chain family. F-type ATPases have 2 components, F(1) - the catalytic core - and F(0) - the membrane proton channel. F(1) has five subunits: alpha(3), beta(3), gamma(1), delta(1), epsilon(1). F(0) has three main subunits: a(1), b(2) and c(10-14). The alpha and beta chains form an alternating ring which encloses part of the gamma chain. F(1) is attached to F(0) by a central stalk formed by the gamma and epsilon chains, while a peripheral stalk is formed by the delta and b chains.

The protein localises to the cell inner membrane. Its function is as follows. F(1)F(0) ATP synthase produces ATP from ADP in the presence of a proton or sodium gradient. F-type ATPases consist of two structural domains, F(1) containing the extramembraneous catalytic core and F(0) containing the membrane proton channel, linked together by a central stalk and a peripheral stalk. During catalysis, ATP synthesis in the catalytic domain of F(1) is coupled via a rotary mechanism of the central stalk subunits to proton translocation. Functionally, this protein is part of the stalk that links CF(0) to CF(1). It either transmits conformational changes from CF(0) to CF(1) or is implicated in proton conduction. This is ATP synthase subunit delta from Psychrobacter sp. (strain PRwf-1).